Consider the following 183-residue polypeptide: ATP synthase subunit delta (183 aa).

It belongs to the ATPase delta chain family. In terms of assembly, F-type ATPases have 2 components, F(1) - the catalytic core - and F(0) - the membrane proton channel. F(1) has five subunits: alpha(3), beta(3), gamma(1), delta(1), epsilon(1). F(0) has three main subunits: a(1), b(2) and c(10-14). The alpha and beta chains form an alternating ring which encloses part of the gamma chain. F(1) is attached to F(0) by a central stalk formed by the gamma and epsilon chains, while a peripheral stalk is formed by the delta and b chains.

Its subcellular location is the cell inner membrane. Functionally, f(1)F(0) ATP synthase produces ATP from ADP in the presence of a proton or sodium gradient. F-type ATPases consist of two structural domains, F(1) containing the extramembraneous catalytic core and F(0) containing the membrane proton channel, linked together by a central stalk and a peripheral stalk. During catalysis, ATP synthesis in the catalytic domain of F(1) is coupled via a rotary mechanism of the central stalk subunits to proton translocation. Its function is as follows. This protein is part of the stalk that links CF(0) to CF(1). It either transmits conformational changes from CF(0) to CF(1) or is implicated in proton conduction. This chain is ATP synthase subunit delta, found in Solidesulfovibrio magneticus (strain ATCC 700980 / DSM 13731 / RS-1) (Desulfovibrio magneticus).